The primary structure comprises 788 residues: Endonuclease MutS2 (788 aa).

332–339 provides a ligand contact to ATP; it reads GPNTGGKT. The 76-residue stretch at 713–788 folds into the Smr domain; sequence VDLRGMDAEE…GTGVTVVELK (76 aa).

This sequence belongs to the DNA mismatch repair MutS family. MutS2 subfamily. As to quaternary structure, homodimer. Binds to stalled ribosomes, contacting rRNA.

In terms of biological role, endonuclease that is involved in the suppression of homologous recombination and thus may have a key role in the control of bacterial genetic diversity. Functionally, acts as a ribosome collision sensor, splitting the ribosome into its 2 subunits. Detects stalled/collided 70S ribosomes which it binds and splits by an ATP-hydrolysis driven conformational change. Acts upstream of the ribosome quality control system (RQC), a ribosome-associated complex that mediates the extraction of incompletely synthesized nascent chains from stalled ribosomes and their subsequent degradation. Probably generates substrates for RQC. The chain is Endonuclease MutS2 from Clostridium botulinum (strain Okra / Type B1).